A 444-amino-acid chain; its full sequence is MNLFRSLAPMGLALALLLPAAAPALAQQGPLRIQITEGVIEPLPFAVPNFVAETSGASQLAQDMARVIAADLSGTGLFREIPASAHISRVTSFDAPIAYNDWKAINAQALITGSVSASGDRVVVKFRLHDVFSDQPLGEGLQFAGSASGWRRMAHKVADVAYSRITGEGGYFDSRVVFVSETGPKNARAKRLAVMDYDGANVQYLTDSSSIVLAPRFSPTGDRILFTSYSTGFPRIYLMDVGSLATRSLAEQPGTMTFAPRFAPDGRTVAFSLEQGGNTDIYTLDTASGTRRQLTNSPSIETAPSYSPDGSQIVFESDRSGGQQLYIMPAGGGEPRRISNGAGRYGTPVWSPRGDLIAFTKQHQGRFHIGVMRTDGSEERLLTASFLDEGPTWAPNGRVLMFTREGAGAGGQPALYSVDISGRNLKKVPLSVPASDPAWSPLLP.

The signal sequence occupies residues 1-26 (MNLFRSLAPMGLALALLLPAAAPALA). Over residues 287-310 (ASGTRRQLTNSPSIETAPSYSPDG) the composition is skewed to polar residues. The segment at 287 to 311 (ASGTRRQLTNSPSIETAPSYSPDGS) is disordered.

The protein belongs to the TolB family. In terms of assembly, the Tol-Pal system is composed of five core proteins: the inner membrane proteins TolA, TolQ and TolR, the periplasmic protein TolB and the outer membrane protein Pal. They form a network linking the inner and outer membranes and the peptidoglycan layer.

The protein localises to the periplasm. Functionally, part of the Tol-Pal system, which plays a role in outer membrane invagination during cell division and is important for maintaining outer membrane integrity. This is Tol-Pal system protein TolB from Cereibacter sphaeroides (strain ATCC 17025 / ATH 2.4.3) (Rhodobacter sphaeroides).